We begin with the raw amino-acid sequence, 244 residues long: Small ribosomal subunit protein eS4 (244 aa).

Residues 1–14 show a composition bias toward basic residues; the sequence is MANKGPRKHLKRLP. The segment at 1 to 36 is disordered; sequence MANKGPRKHLKRLPAPKNWQISRKTNKYTTRPSAGP. The segment covering 19 to 32 has biased composition (polar residues); the sequence is WQISRKTNKYTTRP. The region spanning 43 to 106 is the S4 RNA-binding domain; sequence LPLLLVLRDL…NESFLVVLDE (64 aa).

This sequence belongs to the eukaryotic ribosomal protein eS4 family.

The chain is Small ribosomal subunit protein eS4 from Methanococcus aeolicus (strain ATCC BAA-1280 / DSM 17508 / OCM 812 / Nankai-3).